The chain runs to 423 residues: AP-1 complex subunit mu-1 (423 aa).

N-acetylserine is present on serine 2. Residues threonine 152, threonine 154, and threonine 223 each carry the phosphothreonine modification. In terms of domain architecture, MHD spans 168–421 (KNEVFLDVIE…ITQNGDYQLR (254 aa)).

The protein belongs to the adaptor complexes medium subunit family. Adaptor protein complex 1 (AP-1) is a heterotetramer composed of two large adaptins (gamma-type subunit AP1G1 and beta-type subunit AP1B1), a medium adaptin (mu-type subunit AP1M1 or AP1M2) and a small adaptin (sigma-type subunit AP1S1 or AP1S2 or AP1S3). Interacts with MARCHF11. In terms of processing, phosphorylation of membrane-bound AP1M1/AP1M2 increases its affinity for sorting signals.

The protein resides in the golgi apparatus. Its subcellular location is the cytoplasmic vesicle. It localises to the clathrin-coated vesicle membrane. Functionally, subunit of clathrin-associated adaptor protein complex 1 that plays a role in protein sorting in the trans-Golgi network (TGN) and endosomes. The AP complexes mediate the recruitment of clathrin to membranes and the recognition of sorting signals within the cytosolic tails of transmembrane cargo molecules. In Mus musculus (Mouse), this protein is AP-1 complex subunit mu-1 (Ap1m1).